Consider the following 147-residue polypeptide: uncharacterized protein (147 aa).

2 consecutive transmembrane segments (helical) span residues 35–55 and 62–82; these read TIQL…FGNH and IWLL…LFEP.

As to quaternary structure, has been detected in a cytochrome bc1-aa3 supercomplex; its deletion however leaves complex activity unaffected.

The protein resides in the cell membrane. This is an uncharacterized protein from Corynebacterium glutamicum (strain ATCC 13032 / DSM 20300 / JCM 1318 / BCRC 11384 / CCUG 27702 / LMG 3730 / NBRC 12168 / NCIMB 10025 / NRRL B-2784 / 534).